A 121-amino-acid chain; its full sequence is uncharacterized protein (121 aa).

2 helical membrane-spanning segments follow: residues G16 to V36 and L74 to I94.

Its subcellular location is the cell membrane. This is an uncharacterized protein from Bacillus subtilis (strain 168).